The following is a 749-amino-acid chain: Transcription factor RFX3 (749 aa).

The RFX-type winged-helix DNA-binding region spans 183-258 (HLQWLLDNYE…YHYYGIRVKP (76 aa)).

This sequence belongs to the RFX family.

The protein localises to the nucleus. Transcription factor required for ciliogenesis and islet cell differentiation during endocrine pancreas development. This chain is Transcription factor RFX3 (rfx3), found in Xenopus tropicalis (Western clawed frog).